The sequence spans 240 residues: Phosphoenolpyruvate guanylyltransferase (240 aa).

Residues threonine 161, glycine 178, and serine 181 each contribute to the phosphoenolpyruvate site.

The protein belongs to the CofC family.

It catalyses the reaction phosphoenolpyruvate + GTP + H(+) = enolpyruvoyl-2-diphospho-5'-guanosine + diphosphate. It functions in the pathway cofactor biosynthesis; coenzyme F420 biosynthesis. Its function is as follows. Guanylyltransferase that catalyzes the activation of phosphoenolpyruvate (PEP) as enolpyruvoyl-2-diphospho-5'-guanosine, via the condensation of PEP with GTP. It is involved in the biosynthesis of coenzyme F420, a hydride carrier cofactor. In Rhodococcus opacus (strain B4), this protein is Phosphoenolpyruvate guanylyltransferase.